A 659-amino-acid chain; its full sequence is 1,4-alpha-glucan branching enzyme GlgB 2 (659 aa).

Positions M1–S26 are disordered. D337 (nucleophile) is an active-site residue. E390 acts as the Proton donor in catalysis.

This sequence belongs to the glycosyl hydrolase 13 family. GlgB subfamily. In terms of assembly, monomer.

It catalyses the reaction Transfers a segment of a (1-&gt;4)-alpha-D-glucan chain to a primary hydroxy group in a similar glucan chain.. Its pathway is glycan biosynthesis; glycogen biosynthesis. Its function is as follows. Catalyzes the formation of the alpha-1,6-glucosidic linkages in glycogen by scission of a 1,4-alpha-linked oligosaccharide from growing alpha-1,4-glucan chains and the subsequent attachment of the oligosaccharide to the alpha-1,6 position. The protein is 1,4-alpha-glucan branching enzyme GlgB 2 of Clostridium perfringens (strain SM101 / Type A).